The primary structure comprises 207 residues: Thiamine-phosphate synthase (207 aa).

Residues 37–41 (QYRHK) and N69 contribute to the 4-amino-2-methyl-5-(diphosphooxymethyl)pyrimidine site. The Mg(2+) site is built by D70 and D89. Residues S108 and K138 each coordinate 4-amino-2-methyl-5-(diphosphooxymethyl)pyrimidine. 2-[(2R,5Z)-2-carboxy-4-methylthiazol-5(2H)-ylidene]ethyl phosphate-binding positions include G165 and 185 to 186 (IS).

It belongs to the thiamine-phosphate synthase family. It depends on Mg(2+) as a cofactor.

It catalyses the reaction 2-[(2R,5Z)-2-carboxy-4-methylthiazol-5(2H)-ylidene]ethyl phosphate + 4-amino-2-methyl-5-(diphosphooxymethyl)pyrimidine + 2 H(+) = thiamine phosphate + CO2 + diphosphate. The enzyme catalyses 2-(2-carboxy-4-methylthiazol-5-yl)ethyl phosphate + 4-amino-2-methyl-5-(diphosphooxymethyl)pyrimidine + 2 H(+) = thiamine phosphate + CO2 + diphosphate. It carries out the reaction 4-methyl-5-(2-phosphooxyethyl)-thiazole + 4-amino-2-methyl-5-(diphosphooxymethyl)pyrimidine + H(+) = thiamine phosphate + diphosphate. The protein operates within cofactor biosynthesis; thiamine diphosphate biosynthesis; thiamine phosphate from 4-amino-2-methyl-5-diphosphomethylpyrimidine and 4-methyl-5-(2-phosphoethyl)-thiazole: step 1/1. Functionally, condenses 4-methyl-5-(beta-hydroxyethyl)thiazole monophosphate (THZ-P) and 2-methyl-4-amino-5-hydroxymethyl pyrimidine pyrophosphate (HMP-PP) to form thiamine monophosphate (TMP). This Janthinobacterium sp. (strain Marseille) (Minibacterium massiliensis) protein is Thiamine-phosphate synthase.